The following is a 165-amino-acid chain: MSTVASVKDFVSSFMLTELFKGMALTGKYMFSRKITVQFPEEKTPLSPRFRGLHALRRYDNGEERCIACKLCEAVCPALAITIESEVRDDGSRRTSRYDIDLTKCIFCGFCEEACPVDAIVETHIFEYHGEKRGDLYFTKEMLLAVGDRYEAEIAANKAADAKYR.

4Fe-4S ferredoxin-type domains lie at 57-86 and 96-125; these read RRYDNGEERCIACKLCEAVCPALAITIESE and SRYDIDLTKCIFCGFCEEACPVDAIVETHI. [4Fe-4S] cluster contacts are provided by Cys-66, Cys-69, Cys-72, Cys-76, Cys-105, Cys-108, Cys-111, and Cys-115.

Belongs to the complex I 23 kDa subunit family. As to quaternary structure, NDH-1 is composed of 14 different subunits. Subunits NuoA, H, J, K, L, M, N constitute the membrane sector of the complex. [4Fe-4S] cluster serves as cofactor.

The protein resides in the cell inner membrane. It carries out the reaction a quinone + NADH + 5 H(+)(in) = a quinol + NAD(+) + 4 H(+)(out). In terms of biological role, NDH-1 shuttles electrons from NADH, via FMN and iron-sulfur (Fe-S) centers, to quinones in the respiratory chain. The immediate electron acceptor for the enzyme in this species is believed to be ubiquinone. Couples the redox reaction to proton translocation (for every two electrons transferred, four hydrogen ions are translocated across the cytoplasmic membrane), and thus conserves the redox energy in a proton gradient. The protein is NADH-quinone oxidoreductase subunit I of Polaromonas sp. (strain JS666 / ATCC BAA-500).